The primary structure comprises 450 residues: Methylenetetrahydrofolate--tRNA-(uracil-5-)-methyltransferase TrmFO (450 aa).

FAD is bound at residue 9-14; sequence GGGMAG.

It belongs to the MnmG family. TrmFO subfamily. FAD is required as a cofactor.

The protein resides in the cytoplasm. The catalysed reaction is uridine(54) in tRNA + (6R)-5,10-methylene-5,6,7,8-tetrahydrofolate + NADH + H(+) = 5-methyluridine(54) in tRNA + (6S)-5,6,7,8-tetrahydrofolate + NAD(+). The enzyme catalyses uridine(54) in tRNA + (6R)-5,10-methylene-5,6,7,8-tetrahydrofolate + NADPH + H(+) = 5-methyluridine(54) in tRNA + (6S)-5,6,7,8-tetrahydrofolate + NADP(+). Its function is as follows. Catalyzes the folate-dependent formation of 5-methyl-uridine at position 54 (M-5-U54) in all tRNAs. In Roseobacter denitrificans (strain ATCC 33942 / OCh 114) (Erythrobacter sp. (strain OCh 114)), this protein is Methylenetetrahydrofolate--tRNA-(uracil-5-)-methyltransferase TrmFO.